Reading from the N-terminus, the 97-residue chain is Small ribosomal subunit protein bS6 (97 aa).

The protein belongs to the bacterial ribosomal protein bS6 family.

Functionally, binds together with bS18 to 16S ribosomal RNA. The sequence is that of Small ribosomal subunit protein bS6 from Dictyoglomus turgidum (strain DSM 6724 / Z-1310).